A 404-amino-acid polypeptide reads, in one-letter code: Argininosuccinate synthase (404 aa).

9-17 provides a ligand contact to ATP; the sequence is AYSGGLDTS. Y86 contacts L-citrulline. Residue G116 coordinates ATP. Residues T118, N122, and D123 each coordinate L-aspartate. N122 serves as a coordination point for L-citrulline. L-citrulline contacts are provided by R126, S174, S183, E259, and Y271.

This sequence belongs to the argininosuccinate synthase family. Type 1 subfamily. In terms of assembly, homotetramer.

The protein resides in the cytoplasm. The catalysed reaction is L-citrulline + L-aspartate + ATP = 2-(N(omega)-L-arginino)succinate + AMP + diphosphate + H(+). It participates in amino-acid biosynthesis; L-arginine biosynthesis; L-arginine from L-ornithine and carbamoyl phosphate: step 2/3. The polypeptide is Argininosuccinate synthase (Listeria monocytogenes serotype 4b (strain CLIP80459)).